The chain runs to 671 residues: MFLLPFVIRHSSSIYLPTLRFRGLLTVISRNIHISTPHKMLPLSIEQRRPSRSPEYDQSTLSNYKDFAVLHTDLNLSVSFEKSAISGSVTFQLKKLHEGKNKSDELHLDTSYLDVQEVHIDGSKADFQIEQRKEPLGSRLVINNASCNDNFTLNIQFRTTDKCTALQWLNSKQTKGGKPYVFSQLEAIHARSLFPCFDTPSVKSTFTASIESPLPVVFSGIRIEDTSKDTNIYRFEQKVPIPAYLIGIASGDLSSAPIGPRSTVYTEPFRLKDCQWEFENDVEKFIQTAEKIIFEYEWGTYDILVNVDSYPYGGMESPNMTFATPTLIAHDRSNIDVIAHELAHSWSGNLVTNCSWNHFWLNEGWTVYLERRIIGAIHGEPTRHFSALIGWSDLQNSIDSMKDPERFSTLVQNLNDNTDPDDAFSTVPYEKGFNLLFHLETILGGKAEFDPFIRHYFKKFAKKSLDTFQFLDTLYEFYPEKKEILDSVDWETWLYKPGMPPRPHFITALADNVYQLADKWVEMAQHLKTTEDFRSEFNAIDIKDFNSNQLVLFLETLTQNGHSNKKPKDFDWAKFPVASRALLDIYQDNIVKSQNAEVVFKMFKFQIFAKLQEEYKHLADWLGTVGRMKFVRPGYRLLNSVDRRLALATFDKFKDTYHPICKALVKQDLGL.

Substrate-binding positions include 184-186 and 311-316; these read QLE and PYGGME. H340 contacts Zn(2+). Catalysis depends on E341, which acts as the Proton acceptor. H344 and E363 together coordinate Zn(2+). The Proton donor role is filled by Y429.

Belongs to the peptidase M1 family. Zn(2+) is required as a cofactor.

The protein localises to the cytoplasm. It is found in the nucleus. The enzyme catalyses an epoxide + H2O = an ethanediol. Inhibited by 3-(4-benzyloxyphenyl)-2-(R)-amino-1-propanethiol (thioamine) and N-hydroxy-N-(2-(S)-amino-3-(4-benzyloxyphenyl)propyl)-5-carboxypen-tanamide (hydroxamic acid). The aminopeptidase activity is stimulated by LTA(4). Functionally, aminopeptidase that preferentially cleaves di- and tripeptides. Also has low epoxide hydrolase activity (in vitro). Can hydrolyze the epoxide leukotriene LTA(4) but it forms preferentially 5,6-dihydroxy-7,9,11,14-eicosatetraenoic acid rather than the cytokine leukotriene B(4) as the product compared to the homologous mammalian enzyme (in vitro). The polypeptide is Leucine aminopeptidase 2 (Saccharomyces cerevisiae (strain YJM789) (Baker's yeast)).